The primary structure comprises 746 residues: Disintegrin and metalloproteinase domain-containing protein 18 (746 aa).

The first 16 residues, 1–16 (MFFLLALLTELGRLQA), serve as a signal peptide directing secretion. Positions 17-183 (HVGSEGIFLH…QKKNLSKLLP (167 aa)) are excised as a propeptide. N-linked (GlcNAc...) asparagine glycosylation is found at asparagine 36, asparagine 122, asparagine 149, asparagine 156, asparagine 177, and asparagine 294. At 177–687 (NLSKLLPQYL…EKGYNAHWNN (511 aa)) the chain is on the extracellular side. In terms of domain architecture, Peptidase M12B spans 184 to 381 (QYLEIYIIVE…FEAKCLQKLS (198 aa)). Intrachain disulfides connect cysteine 293–cysteine 376, cysteine 335–cysteine 360, cysteine 337–cysteine 342, and cysteine 450–cysteine 471. 4 N-linked (GlcNAc...) asparagine glycosylation sites follow: asparagine 359, asparagine 465, asparagine 611, and asparagine 625. A Disintegrin domain is found at 390 to 479 (QPVCGNGILE…DCVPDTYALN (90 aa)). The EGF-like domain maps to 620-654 (TGYNCNTTTKCKGKGICNNFGNCQCFPGHKPPDCK). 3 disulfide bridges follow: cysteine 624–cysteine 636, cysteine 630–cysteine 642, and cysteine 644–cysteine 653. Residues 688–708 (WFILSFYIVLPFFIIFTIVIF) form a helical membrane-spanning segment. At 709 to 746 (KRNEIRKLCNRENTELIHPLYQKAMMWNINIAQNFRSK) the chain is on the cytoplasmic side.

Post-translationally, the prodomain and the metalloprotease-like domain are cleaved during the epididymal maturation of the spermatozoa. In terms of tissue distribution, expressed predominantly in adult and prepubertal testis.

It is found in the membrane. In terms of biological role, sperm surface membrane protein that may be involved in spermatogenesis and fertilization. This is a non catalytic metalloprotease-like protein. This is Disintegrin and metalloproteinase domain-containing protein 18 (ADAM18) from Macaca fascicularis (Crab-eating macaque).